Consider the following 116-residue polypeptide: Thioredoxin (116 aa).

Positions 2 to 113 (TDSEKSATIK…LLRELSDVVP (112 aa)) constitute a Thioredoxin domain. Cys37 and Cys40 form a disulfide bridge.

The protein belongs to the thioredoxin family.

Functionally, participates in various redox reactions through the reversible oxidation of its active center dithiol to a disulfide and catalyzes dithiol-disulfide exchange reactions. This chain is Thioredoxin (trxA), found in Mycobacterium bovis (strain ATCC BAA-935 / AF2122/97).